We begin with the raw amino-acid sequence, 229 residues long: UPF0758 protein Fjoh_0413 (229 aa).

The 123-residue stretch at 107 to 229 folds into the MPN domain; that stretch reads KITSSKDAFT…YYSFVDEGIF (123 aa). Residues His178, His180, and Asp191 each contribute to the Zn(2+) site. Positions 178-191 match the JAMM motif motif; that stretch reads HNHPSGELNPSQAD.

This sequence belongs to the UPF0758 family.

The chain is UPF0758 protein Fjoh_0413 from Flavobacterium johnsoniae (strain ATCC 17061 / DSM 2064 / JCM 8514 / BCRC 14874 / CCUG 350202 / NBRC 14942 / NCIMB 11054 / UW101) (Cytophaga johnsonae).